Reading from the N-terminus, the 354-residue chain is 3-dehydroquinate synthase (354 aa).

Residues 61–66, 119–120, K132, K141, and 159–162 contribute to the NAD(+) site; these read DGESTK, TT, and FLET. Zn(2+)-binding residues include E174, H238, and H254.

Belongs to the sugar phosphate cyclases superfamily. Dehydroquinate synthase family. NAD(+) is required as a cofactor. The cofactor is Co(2+). It depends on Zn(2+) as a cofactor.

The protein localises to the cytoplasm. It carries out the reaction 7-phospho-2-dehydro-3-deoxy-D-arabino-heptonate = 3-dehydroquinate + phosphate. The protein operates within metabolic intermediate biosynthesis; chorismate biosynthesis; chorismate from D-erythrose 4-phosphate and phosphoenolpyruvate: step 2/7. Its function is as follows. Catalyzes the conversion of 3-deoxy-D-arabino-heptulosonate 7-phosphate (DAHP) to dehydroquinate (DHQ). The sequence is that of 3-dehydroquinate synthase from Saccharolobus solfataricus (strain ATCC 35092 / DSM 1617 / JCM 11322 / P2) (Sulfolobus solfataricus).